The primary structure comprises 155 residues: Deoxyuridine 5'-triphosphate nucleotidohydrolase (155 aa).

Substrate is bound by residues 74–76, Asn-87, and 91–93; these read RSG and LID.

Belongs to the dUTPase family. It depends on Mg(2+) as a cofactor.

The enzyme catalyses dUTP + H2O = dUMP + diphosphate + H(+). It functions in the pathway pyrimidine metabolism; dUMP biosynthesis; dUMP from dCTP (dUTP route): step 2/2. Its function is as follows. This enzyme is involved in nucleotide metabolism: it produces dUMP, the immediate precursor of thymidine nucleotides and it decreases the intracellular concentration of dUTP so that uracil cannot be incorporated into DNA. This Xanthomonas oryzae pv. oryzae (strain MAFF 311018) protein is Deoxyuridine 5'-triphosphate nucleotidohydrolase.